Reading from the N-terminus, the 464-residue chain is ATP synthase subunit beta (464 aa).

148 to 155 (GGAGVGKT) contacts ATP.

It belongs to the ATPase alpha/beta chains family. F-type ATPases have 2 components, CF(1) - the catalytic core - and CF(0) - the membrane proton channel. CF(1) has five subunits: alpha(3), beta(3), gamma(1), delta(1), epsilon(1). CF(0) has three main subunits: a(1), b(2) and c(9-12). The alpha and beta chains form an alternating ring which encloses part of the gamma chain. CF(1) is attached to CF(0) by a central stalk formed by the gamma and epsilon chains, while a peripheral stalk is formed by the delta and b chains.

The protein resides in the cell inner membrane. The catalysed reaction is ATP + H2O + 4 H(+)(in) = ADP + phosphate + 5 H(+)(out). Its function is as follows. Produces ATP from ADP in the presence of a proton gradient across the membrane. The catalytic sites are hosted primarily by the beta subunits. This is ATP synthase subunit beta from Acinetobacter baylyi (strain ATCC 33305 / BD413 / ADP1).